The primary structure comprises 142 residues: Transcriptional regulator MraZ (142 aa).

SpoVT-AbrB domains lie at 5-47 (NYQH…TNQE) and 76-119 (SLTV…DINA).

This sequence belongs to the MraZ family. Forms oligomers.

Its subcellular location is the cytoplasm. It is found in the nucleoid. The sequence is that of Transcriptional regulator MraZ from Mycoplasmoides gallisepticum (strain R(low / passage 15 / clone 2)) (Mycoplasma gallisepticum).